The sequence spans 31 residues: Photosystem II reaction center protein M (31 aa).

Residues 5–25 (ILAFIATALLILVPTAFLLII) form a helical membrane-spanning segment.

This sequence belongs to the PsbM family. PSII is composed of 1 copy each of membrane proteins PsbA, PsbB, PsbC, PsbD, PsbE, PsbF, PsbH, PsbI, PsbJ, PsbK, PsbL, PsbM, PsbT, PsbX, PsbY, PsbZ, Psb30/Ycf12, at least 3 peripheral proteins of the oxygen-evolving complex and a large number of cofactors. It forms dimeric complexes.

It localises to the plastid membrane. Its function is as follows. One of the components of the core complex of photosystem II (PSII). PSII is a light-driven water:plastoquinone oxidoreductase that uses light energy to abstract electrons from H(2)O, generating O(2) and a proton gradient subsequently used for ATP formation. It consists of a core antenna complex that captures photons, and an electron transfer chain that converts photonic excitation into a charge separation. This subunit is found at the monomer-monomer interface. This is Photosystem II reaction center protein M from Cuscuta exaltata (Tall dodder).